We begin with the raw amino-acid sequence, 344 residues long: Protein BREVIS RADIX (344 aa).

One can recognise a BRX 1 domain in the interval 139 to 194 (KEWMAQVEPGVHITFASLPTGGNDLKRIRFSREMFDKWQAQRWWGENYDKIVELYN). A disordered region spans residues 203–286 (LQTPARSDDQ…DPPSMSNASE (84 aa)). Residues 223–233 (DSARESKDWTP) are compositionally biased toward basic and acidic residues. Positions 248–264 (YGGSSNYGPGSYHGGPP) are enriched in low complexity. The 56-residue stretch at 289 to 344 (AEWIEEDEPGVYITIRQLSDGTRELRRVRFSRERFGEVHAKTWWEQNRERIQTQYL) folds into the BRX 2 domain.

This sequence belongs to the BRX family. As to quaternary structure, homodimer and heterodimer with BRXL1. Interacts with NGA1 and ARF5. In terms of tissue distribution, expressed in the developing protophloem up to the elongation zone in root meristem of young seedlings, in the columella and the phloem vasculature throughout the root and in the phloem vasculature in the shoot. Detected in the shoot meristem and in primordia. Low expression in stomata. Confined to sieve element precursor cells and to protophloem.

The protein resides in the nucleus. It localises to the cell membrane. Its function is as follows. Acts as a regulator of cell proliferation and elongation in the root and shoot. Regulates roots architecture and primary root protophloem differentiation. BRX, BAM3, and CLE45 act together to regulate the transition of protophloem cells from proliferation to differentiation, thus impinging on postembryonic growth capacity of the root meristem. Probable transcription regulator. Regulated by the auxin response factor ARF5. Polarly localized in vascular cells and subject to endocytic recycling. Required for CPD expression and for correct nuclear auxin response. Mediates cross-talk between the auxin and brassinosteroid pathways. BRX is a target for auxin-induced, proteasome-mediated degradation. This Arabidopsis thaliana (Mouse-ear cress) protein is Protein BREVIS RADIX.